Reading from the N-terminus, the 138-residue chain is Small ribosomal subunit protein bS6 (138 aa).

Positions 100–138 are disordered; that stretch reads SPLAKGREEDDSDSSARRARDDSDDDGDDDEDDRRASAD. Over residues 121–131 the composition is skewed to acidic residues; that stretch reads DSDDDGDDDED.

This sequence belongs to the bacterial ribosomal protein bS6 family.

Binds together with bS18 to 16S ribosomal RNA. This Thioalkalivibrio sulfidiphilus (strain HL-EbGR7) protein is Small ribosomal subunit protein bS6.